The following is a 567-amino-acid chain: Low-affinity glucose transporter HXT3 (567 aa).

Residues 1–29 show a composition bias toward polar residues; that stretch reads MNSTPDLISPQKSSENSNADLPSNSSQVM. Residues 1 to 30 are disordered; the sequence is MNSTPDLISPQKSSENSNADLPSNSSQVMN. Residues 1–57 lie on the Cytoplasmic side of the membrane; it reads MNSTPDLISPQKSSENSNADLPSNSSQVMNMPEEKGVQDDFQAEADQVLTNPNTGKG. S23 carries the phosphoserine modification. Residues 58-78 form a helical membrane-spanning segment; it reads AYVTVSICCVMVAFGGFVFGW. The Extracellular portion of the chain corresponds to 79–113; that stretch reads DTGTISGFVAQTDFLRRFGMKHKDGSYYLSKVRTG. Residues 114-134 traverse the membrane as a helical segment; the sequence is LIVSIFNIGCAIGGIILAKLG. The Cytoplasmic portion of the chain corresponds to 135-140; sequence DMYGRK. The chain crosses the membrane as a helical span at residues 141–161; that stretch reads MGLIVVVVIYIIGIIIQIASI. Topologically, residues 162-171 are extracellular; that stretch reads NKWYQYFIGR. The helical transmembrane segment at 172 to 192 threads the bilayer; sequence IISGLGVGGIAVLSPMLISEV. The Cytoplasmic portion of the chain corresponds to 193–198; the sequence is APKEMR. A helical membrane pass occupies residues 199 to 219; it reads GTLVSCYQLMITLGIFLGYCT. Residues 220 to 233 are Extracellular-facing; sequence NFGTKNYSNSVQWR. N225 carries N-linked (GlcNAc...) asparagine glycosylation. The chain crosses the membrane as a helical span at residues 234–254; the sequence is VPLGLCFAWALFMIGGMTFVP. The Cytoplasmic segment spans residues 255–337; that stretch reads ESPRYLVEAG…IQSLQQLTGD (83 aa). The chain crosses the membrane as a helical span at residues 338-354; that stretch reads NYFFYYGTTVFNAVGMS. The Extracellular portion of the chain corresponds to 355-360; it reads DSFETS. Residues 361–378 form a helical membrane-spanning segment; it reads IVFGVVNFFSTCCSLYTV. The Cytoplasmic portion of the chain corresponds to 379-385; that stretch reads DRFGRRN. The chain crosses the membrane as a helical span at residues 386 to 406; it reads CLLYGAIGMVCCYVVYASVGV. Over 407–428 the chain is Extracellular; sequence TRLWPNGEGNGSSKGAGNCMIV. A glycan (N-linked (GlcNAc...) asparagine) is linked at N416. The helical transmembrane segment at 429-449 threads the bilayer; that stretch reads FACFYIFCFATTWAPIAYVVI. At 450 to 466 the chain is on the cytoplasmic side; the sequence is SETFPLRVKSKAMSIAT. A helical membrane pass occupies residues 467 to 487; that stretch reads AANWLWGFLIGFFTPFITGAI. Residue N488 is a topological domain, extracellular. A helical transmembrane segment spans residues 489 to 509; sequence FYYGYVFMGCMVFAYFYVFFF. At 510-567 the chain is on the cytoplasmic side; that stretch reads VPETKGLTLEEVNDMYAEGVLPWKSASWVPTSQRGANYDADALMHDDQPFYKKMFGKK.

Belongs to the major facilitator superfamily. Sugar transporter (TC 2.A.1.1) family.

It is found in the membrane. Functionally, low-affinity glucose transporter. This Saccharomyces cerevisiae (strain ATCC 204508 / S288c) (Baker's yeast) protein is Low-affinity glucose transporter HXT3 (HXT3).